A 306-amino-acid polypeptide reads, in one-letter code: Ribonuclease Z (306 aa).

Zn(2+) is bound by residues H63, H65, D67, H68, H141, D211, and H269. D67 functions as the Proton acceptor in the catalytic mechanism.

The protein belongs to the RNase Z family. As to quaternary structure, homodimer. Zn(2+) is required as a cofactor.

It catalyses the reaction Endonucleolytic cleavage of RNA, removing extra 3' nucleotides from tRNA precursor, generating 3' termini of tRNAs. A 3'-hydroxy group is left at the tRNA terminus and a 5'-phosphoryl group is left at the trailer molecule.. Zinc phosphodiesterase, which displays some tRNA 3'-processing endonuclease activity. Probably involved in tRNA maturation, by removing a 3'-trailer from precursor tRNA. This Staphylococcus carnosus (strain TM300) protein is Ribonuclease Z.